The sequence spans 361 residues: Phosphoserine aminotransferase (361 aa).

Residue arginine 42 participates in L-glutamate binding. Pyridoxal 5'-phosphate-binding positions include 76 to 77 (AR), tryptophan 102, threonine 153, aspartate 173, and glutamine 196. Lysine 197 carries the post-translational modification N6-(pyridoxal phosphate)lysine. 238 to 239 (NT) lines the pyridoxal 5'-phosphate pocket.

The protein belongs to the class-V pyridoxal-phosphate-dependent aminotransferase family. SerC subfamily. Homodimer. Requires pyridoxal 5'-phosphate as cofactor.

It is found in the cytoplasm. The enzyme catalyses O-phospho-L-serine + 2-oxoglutarate = 3-phosphooxypyruvate + L-glutamate. It carries out the reaction 4-(phosphooxy)-L-threonine + 2-oxoglutarate = (R)-3-hydroxy-2-oxo-4-phosphooxybutanoate + L-glutamate. It participates in amino-acid biosynthesis; L-serine biosynthesis; L-serine from 3-phospho-D-glycerate: step 2/3. Its pathway is cofactor biosynthesis; pyridoxine 5'-phosphate biosynthesis; pyridoxine 5'-phosphate from D-erythrose 4-phosphate: step 3/5. In terms of biological role, catalyzes the reversible conversion of 3-phosphohydroxypyruvate to phosphoserine and of 3-hydroxy-2-oxo-4-phosphonooxybutanoate to phosphohydroxythreonine. The chain is Phosphoserine aminotransferase from Yersinia enterocolitica serotype O:8 / biotype 1B (strain NCTC 13174 / 8081).